Consider the following 334-residue polypeptide: Nucleoid-associated protein VS_0951 (334 aa).

It belongs to the YejK family.

It is found in the cytoplasm. It localises to the nucleoid. The sequence is that of Nucleoid-associated protein VS_0951 from Vibrio atlanticus (strain LGP32) (Vibrio splendidus (strain Mel32)).